Here is a 336-residue protein sequence, read N- to C-terminus: Vomeronasal type-1 receptor 102 (336 aa).

Residues 1–42 are Extracellular-facing; the sequence is MVGVQICQGMTSEILFFSLQPQFSNMMNKNSRLHIDSNIRNT. The helical transmembrane segment at 43–63 threads the bilayer; sequence FFTEIGIGVSANSLLLLFNIF. Residues 64-75 are Cytoplasmic-facing; that stretch reads KFIHGQRSRLTD. Residues 76–96 form a helical membrane-spanning segment; the sequence is LPIGLLSLINLLMLLIMACIA. The Extracellular segment spans residues 97-120; it reads TDIFISCRRWDDIICKSLLYLYRT. Cysteine 111 and cysteine 198 are joined by a disulfide. A helical membrane pass occupies residues 121–140; that stretch reads FRGLSLSTTCLLSVLQAIIL. Over 141–157 the chain is Cytoplasmic; sequence SPRSSCLAKYKHKPPHH. Residues 158-178 form a helical membrane-spanning segment; the sequence is IFCAMLFLSVLYMFISSHLLL. At 179–213 the chain is on the extracellular side; that stretch reads SIIATPNLTTNDFIHVSQSCSILPMSYLMQSMFST. Asparagine 185 carries N-linked (GlcNAc...) asparagine glycosylation. Residues 214-234 form a helical membrane-spanning segment; the sequence is LLAIRNVFLISLIVLSTWYMV. Residues 235–264 are Cytoplasmic-facing; sequence ALLCRHRKQTRHLQDTSLSRKASPEQRATR. The chain crosses the membrane as a helical span at residues 265-285; it reads SILMLRSLFVLMSIFDSIVSC. Residues 286-296 are Extracellular-facing; it reads SRTMYLNDPTS. Residues 297–317 traverse the membrane as a helical segment; it reads YSIQLLVVHIYATVSPFVFMI. Over 318–336 the chain is Cytoplasmic; sequence TEKHIVNYLKSMYVRVLNV.

This sequence belongs to the G-protein coupled receptor 1 family. As to expression, expressed in 1-4% of neurons of the vomeronasal organ. Only one pheromone receptor gene may be expressed in a particular neuron. Not expressed in the main olfactory epithelium.

It is found in the cell membrane. Functionally, putative pheromone receptor implicated in the regulation of social as well as reproductive behavior. This Rattus norvegicus (Rat) protein is Vomeronasal type-1 receptor 102 (Vom1r102).